The chain runs to 1197 residues: PAN2-PAN3 deadenylation complex catalytic subunit PAN2 (1197 aa).

WD repeat units lie at residues 153 to 193 (DEAE…QKYT), 195 to 231 (EVPG…VEHE), 244 to 280 (VHGN…ATTP), and 328 to 367 (TVGP…TFNT). The tract at residues 368-485 (YSRETDFALP…IGREEEPHLY (118 aa)) is linker. The USP domain occupies 486 to 919 (MVAKKYRKVT…VPAILYYARR (434 aa)). In terms of domain architecture, Exonuclease spans 970 to 1142 (VGLDAEFVTL…EDARTALQLY (173 aa)). Positions 973, 975, 1082, and 1134 each coordinate a divalent metal cation. The disordered stretch occupies residues 1176-1197 (VPEPDSQSSPKHGAVFPPVLAL).

Belongs to the peptidase C19 family. PAN2 subfamily. As to quaternary structure, forms a heterotrimer with an asymmetric homodimer of the regulatory subunit PAN3 to form the poly(A)-nuclease (PAN) deadenylation complex. It depends on a divalent metal cation as a cofactor.

The protein localises to the cytoplasm. The protein resides in the P-body. It localises to the nucleus. It catalyses the reaction Exonucleolytic cleavage of poly(A) to 5'-AMP.. With respect to regulation, positively regulated by the regulatory subunit PAN3. In terms of biological role, catalytic subunit of the poly(A)-nuclease (PAN) deadenylation complex, one of two cytoplasmic mRNA deadenylases involved in general and miRNA-mediated mRNA turnover. PAN specifically shortens poly(A) tails of RNA and the activity is stimulated by poly(A)-binding protein (PABP). PAN deadenylation is followed by rapid degradation of the shortened mRNA tails by the CCR4-NOT complex. Deadenylated mRNAs are then degraded by two alternative mechanisms, namely exosome-mediated 3'-5' exonucleolytic degradation, or deadenylation-dependent mRNA decaping and subsequent 5'-3' exonucleolytic degradation by XRN1. In Gallus gallus (Chicken), this protein is PAN2-PAN3 deadenylation complex catalytic subunit PAN2.